We begin with the raw amino-acid sequence, 301 residues long: Probable alpha-L-glutamate ligase (301 aa).

The ATP-grasp domain occupies 104 to 287 (LQLLSRRGIG…VAGMIIGYLE (184 aa)). ATP is bound by residues Lys-141, 178-179 (EY), Asp-187, and 211-213 (RSN). Mg(2+)-binding residues include Asp-248, Glu-260, and Asn-262. Residues Asp-248, Glu-260, and Asn-262 each contribute to the Mn(2+) site.

The protein belongs to the RimK family. The cofactor is Mg(2+). It depends on Mn(2+) as a cofactor.

In Pseudomonas syringae pv. syringae (strain B728a), this protein is Probable alpha-L-glutamate ligase.